The following is a 420-amino-acid chain: MLRRDMNIADYDPELWQAIQGENRRQEEHIELIASENYASPRVMEAQGSQFTNKYAEGYPGKRYYGGCEYADIVEQLAIERAKELFGADYANVQPHSGSQANAAVYGALLMPGDTILGMSLAHGGHLTHGASVSFSGKVYHAEQYGITAEGVIDYDALRKQAHEVKPKMIVGGFSAYSQIVDWAKMREIADEVGAYLFVDMAHVAGLIAAGVYPSPLPHAHVVTTTTHKTLAGPRGGLILSNAKDEEIYKKLQNAVFPREQGGPLVHIIAAKAVCFKEALEPEYKVYQQQVVKNAKAMVEVFKQRGYNVVSNGTENHLFLVDLVSHGLTGKAADAALGKANITVNKNAVPNDPQKPFITSGIRVGTPSVTRRGFKEAEVRELAGWMCDVLDNIGKDNEAAVIEATKVKVLDICKRLPVYP.

(6S)-5,6,7,8-tetrahydrofolate-binding positions include L121 and 125-127; that span reads GHL. K229 bears the N6-(pyridoxal phosphate)lysine mark.

The protein belongs to the SHMT family. In terms of assembly, homodimer. Pyridoxal 5'-phosphate serves as cofactor.

The protein resides in the cytoplasm. It catalyses the reaction (6R)-5,10-methylene-5,6,7,8-tetrahydrofolate + glycine + H2O = (6S)-5,6,7,8-tetrahydrofolate + L-serine. It functions in the pathway one-carbon metabolism; tetrahydrofolate interconversion. It participates in amino-acid biosynthesis; glycine biosynthesis; glycine from L-serine: step 1/1. Functionally, catalyzes the reversible interconversion of serine and glycine with tetrahydrofolate (THF) serving as the one-carbon carrier. This reaction serves as the major source of one-carbon groups required for the biosynthesis of purines, thymidylate, methionine, and other important biomolecules. Also exhibits THF-independent aldolase activity toward beta-hydroxyamino acids, producing glycine and aldehydes, via a retro-aldol mechanism. This is Serine hydroxymethyltransferase from Glaesserella parasuis serovar 5 (strain SH0165) (Haemophilus parasuis).